The chain runs to 228 residues: Sodium channel regulatory subunit beta-4 (228 aa).

The N-terminal stretch at 1 to 30 is a signal peptide; sequence MSRAGNRGNTQARWLGIGLLGLFLLPMYLS. Residues 31–148 form the Ig-like C2-type domain; that stretch reads LEVSVGKATT…KDLNNSATIF (118 aa). Residues 31–161 lie on the Extracellular side of the membrane; the sequence is LEVSVGKATT…VDKLEEVDNT (131 aa). N-linked (GlcNAc...) asparagine glycosylation is found at asparagine 45, asparagine 71, asparagine 113, and asparagine 142. The cysteines at positions 53 and 131 are disulfide-linked. The helical transmembrane segment at 162 to 182 threads the bilayer; sequence VTLIILAVVGGVIGLLVCILL. Residues 183–228 are Cytoplasmic-facing; sequence LKKLITFILKKTREKKKECLVSSSGNDNTENGLPGSKAEEKPPTKV. The segment at 199 to 228 is disordered; the sequence is KECLVSSSGNDNTENGLPGSKAEEKPPTKV. Polar residues predominate over residues 203 to 213; that stretch reads VSSSGNDNTEN. Residues 219 to 228 are compositionally biased toward basic and acidic residues; it reads KAEEKPPTKV.

Belongs to the sodium channel auxiliary subunit SCN4B (TC 8.A.17) family. In terms of assembly, a voltage-gated sodium (Nav) channel consists of an ion-conducting pore-forming alpha subunit functional on its own that is regulated by one or more beta subunits. The beta subunit SCN4B is disulfide-linked to the pore-forming alpha subunit. Interacts with SCN1A; regulatory subunit of SCN1A/Nav1.1. Interacts with SCN2A; regulatory subunit of SCN2A/Nav1.2. In terms of processing, contains an interchain disulfide bond with SCN2A. As to expression, expressed at a high level in dorsal root ganglia, at a lower level in brain, spinal cord, skeletal muscle and heart.

It is found in the cell membrane. Its function is as follows. Regulatory subunit of multiple voltage-gated sodium (Nav) channels directly mediating the depolarization of excitable membranes. Navs, also called VGSCs (voltage-gated sodium channels) or VDSCs (voltage-dependent sodium channels), operate by switching between closed and open conformations depending on the voltage difference across the membrane. In the open conformation they allow Na(+) ions to selectively pass through the pore, along their electrochemical gradient. The influx of Na+ ions provokes membrane depolarization, initiating the propagation of electrical signals throughout cells and tissues. The accessory beta subunits participate in localization and functional modulation of the Nav channels. Modulates the activity of SCN1A/Nav1.1. Modulates the activity of SCN2A/Nav1.2. This chain is Sodium channel regulatory subunit beta-4, found in Rattus norvegicus (Rat).